Reading from the N-terminus, the 450-residue chain is Tubulin alpha-5 chain (450 aa).

The GTP site is built by Gln-11, Glu-71, Gly-144, Thr-145, Thr-179, Asn-206, and Asn-228. Glu-71 lines the Mg(2+) pocket. Glu-254 is a catalytic residue.

It belongs to the tubulin family. As to quaternary structure, dimer of alpha and beta chains. A typical microtubule is a hollow water-filled tube with an outer diameter of 25 nm and an inner diameter of 15 nM. Alpha-beta heterodimers associate head-to-tail to form protofilaments running lengthwise along the microtubule wall with the beta-tubulin subunit facing the microtubule plus end conferring a structural polarity. Microtubules usually have 13 protofilaments but different protofilament numbers can be found in some organisms and specialized cells. Mg(2+) is required as a cofactor. In terms of processing, undergoes a tyrosination/detyrosination cycle, the cyclic removal and re-addition of a C-terminal tyrosine residue by the enzymes tubulin tyrosine carboxypeptidase (TTCP) and tubulin tyrosine ligase (TTL), respectively.

It is found in the cytoplasm. The protein localises to the cytoskeleton. It catalyses the reaction GTP + H2O = GDP + phosphate + H(+). In terms of biological role, tubulin is the major constituent of microtubules, a cylinder consisting of laterally associated linear protofilaments composed of alpha- and beta-tubulin heterodimers. Microtubules grow by the addition of GTP-tubulin dimers to the microtubule end, where a stabilizing cap forms. Below the cap, tubulin dimers are in GDP-bound state, owing to GTPase activity of alpha-tubulin. This chain is Tubulin alpha-5 chain (TUBA5), found in Zea mays (Maize).